The chain runs to 85 residues: Large ribosomal subunit protein bL27 (85 aa).

The disordered stretch occupies residues 1 to 20 (MATKKAGGSTRNGRDSEAKR).

It belongs to the bacterial ribosomal protein bL27 family.

This Pasteurella multocida (strain Pm70) protein is Large ribosomal subunit protein bL27.